The chain runs to 295 residues: Protoheme IX farnesyltransferase (295 aa).

9 helical membrane passes run 8–28 (VTKP…FLLA), 35–55 (YPLF…GCVF), 84–104 (ASLV…WFGA), 107–127 (LACW…SLYM), 132–152 (VYGT…GYCA), 162–182 (AILL…IAIF), 208–228 (ITLY…GGYA), 233–253 (LVVA…GYKV), and 264–284 (FVFS…DFMV).

This sequence belongs to the UbiA prenyltransferase family. Protoheme IX farnesyltransferase subfamily.

The protein localises to the cell inner membrane. The catalysed reaction is heme b + (2E,6E)-farnesyl diphosphate + H2O = Fe(II)-heme o + diphosphate. Its pathway is porphyrin-containing compound metabolism; heme O biosynthesis; heme O from protoheme: step 1/1. Functionally, converts heme B (protoheme IX) to heme O by substitution of the vinyl group on carbon 2 of heme B porphyrin ring with a hydroxyethyl farnesyl side group. The protein is Protoheme IX farnesyltransferase of Klebsiella pneumoniae subsp. pneumoniae (strain ATCC 700721 / MGH 78578).